The sequence spans 796 residues: Volume-regulated anion channel subunit LRRC8E (796 aa).

Topologically, residues 1–22 are cytoplasmic; sequence MIPVAEFKQFTEQQPAFKVLKP. The helical transmembrane segment at 23–43 threads the bilayer; it reads WWDVLAEYLTVAMLMIGVFGC. At 44-116 the chain is on the extracellular side; sequence TLQVTQDKII…YETALHWYAK (73 aa). Cys-54 and Cys-301 are disulfide-bonded. Asn-63 is a glycosylation site (N-linked (GlcNAc...) asparagine). A helical membrane pass occupies residues 117–137; it reads YFPYLVVIHTLIFMVCTSFWF. Topologically, residues 138–265 are cytoplasmic; the sequence is KFPGTSSKIE…IRQTVLKVCK (128 aa). A helical transmembrane segment spans residues 266–286; sequence FLAILVYNLVYVEKISFLVAC. The Extracellular portion of the chain corresponds to 287 to 313; that stretch reads RVETSEVTGYASFCCNHTKAHLFSKLA. N-linked (GlcNAc...) asparagine glycosylation occurs at Asn-302. Residues 314 to 334 traverse the membrane as a helical segment; the sequence is FCYISFVCIYGLTCIYTLYWL. The Cytoplasmic portion of the chain corresponds to 335-796; that stretch reads FHRPLKEYSF…AEVRDKMEEE (462 aa). 11 LRR repeats span residues 508–529, 536–557, 559–579, 583–604, 606–627, 631–652, 654–675, 677–698, 700–721, 723–744, and 746–767; these read GLEE…ATLE, QLKV…TDVA, HLQR…NSLK, ALRE…VFSL, ALQE…LSFQ, KLVT…VRKL, SLEQ…LGLC, GLRL…VGLL, NLQH…LFFC, KLRT…VGAL, and ALSR…LGNC.

It belongs to the LRRC8 family. In terms of assembly, heterohexamer; oligomerizes with other LRRC8 proteins (LRRC8A, LRRC8C, LRRC8D and/or LRRC8B) to form a heterohexamer. In vivo, the subunit composition may depend primarily on expression levels, and heterooligomeric channels containing various proportions of the different LRRC8 proteins may coexist.

It is found in the cell membrane. Its subcellular location is the endoplasmic reticulum membrane. The protein resides in the lysosome membrane. The enzyme catalyses chloride(in) = chloride(out). It catalyses the reaction iodide(out) = iodide(in). It carries out the reaction taurine(out) = taurine(in). The catalysed reaction is 2',3'-cGAMP(out) = 2',3'-cGAMP(in). Its function is as follows. Non-essential component of the volume-regulated anion channel (VRAC, also named VSOAC channel), an anion channel required to maintain a constant cell volume in response to extracellular or intracellular osmotic changes. The VRAC channel conducts iodide better than chloride and can also conduct organic osmolytes like taurine. Mediates efflux of amino acids, such as aspartate, in response to osmotic stress. The VRAC channel also mediates transport of immunoreactive cyclic dinucleotide GMP-AMP (2'-3'-cGAMP), an immune messenger produced in response to DNA virus in the cytosol. Channel activity requires LRRC8A plus at least one other family member (LRRC8B, LRRC8C, LRRC8D or LRRC8E); channel characteristics depend on the precise subunit composition. Also plays a role in lysosome homeostasis by forming functional lysosomal VRAC channels in response to low cytoplasmic ionic strength condition: lysosomal VRAC channels are necessary for the formation of large lysosome-derived vacuoles, which store and then expel excess water to maintain cytosolic water homeostasis. This is Volume-regulated anion channel subunit LRRC8E from Homo sapiens (Human).